The sequence spans 276 residues: Orotidine 5'-phosphate decarboxylase (276 aa).

The active-site Proton donor is the Lys96.

The protein belongs to the OMP decarboxylase family. Type 2 subfamily.

It carries out the reaction orotidine 5'-phosphate + H(+) = UMP + CO2. It participates in pyrimidine metabolism; UMP biosynthesis via de novo pathway; UMP from orotate: step 2/2. The polypeptide is Orotidine 5'-phosphate decarboxylase (Porphyromonas gingivalis (strain ATCC BAA-308 / W83)).